The primary structure comprises 651 residues: Beta-glucuronidase (651 aa).

The signal sequence occupies residues Met1–Ala22. N-linked (GlcNAc...) asparagine glycosylation is found at Asn172 and Asn419. The active-site Proton donor is the Glu450. Residue Asn630 is glycosylated (N-linked (GlcNAc...) asparagine).

Belongs to the glycosyl hydrolase 2 family. As to quaternary structure, homotetramer.

Its subcellular location is the lysosome. The catalysed reaction is a beta-D-glucuronoside + H2O = D-glucuronate + an alcohol. With respect to regulation, inhibited by L-aspartic acid. In terms of biological role, plays an important role in the degradation of dermatan and keratan sulfates. This Canis lupus familiaris (Dog) protein is Beta-glucuronidase (GUSB).